Reading from the N-terminus, the 62-residue chain is Protein DsrB (62 aa).

It belongs to the DsrB family.

The chain is Protein DsrB from Citrobacter koseri (strain ATCC BAA-895 / CDC 4225-83 / SGSC4696).